Reading from the N-terminus, the 457-residue chain is Polygalacturonase-2 (457 aa).

An N-terminal signal peptide occupies residues 1–24 (MVIQRNSILLLIIIFASSISTCRS). Positions 25-71 (NVIDDNLFKQVYDNILEQEFAHDFQAYLSYLSKNIESNNNIDKVDKN) are excised as a propeptide. 2 N-linked (GlcNAc...) asparagine glycosylation sites follow: N189 and N240. PbH1 repeat units follow at residues 228 to 255 (SCTN…HVSN) and 256 to 277 (TQYI…SIVS). The active-site Proton donor is the D270. A glycan (N-linked (GlcNAc...) asparagine) is linked at N286. H293 is an active-site residue. 2 PbH1 repeats span residues 309-330 (VSNV…RIKT) and 338-359 (ASNI…IIDQ). A glycan (N-linked (GlcNAc...) asparagine) is linked at N311. Positions 445–457 (LEISEDEALLYNY) are excised as a propeptide.

This sequence belongs to the glycosyl hydrolase 28 family. In terms of assembly, monomer PG2 (isoenzymes PG2A and PG2B). Also forms heterodimers called polygalacturonase 1 (PG1) with the beta subunit GP1. In terms of processing, N-glycosylated. PG2B isozyme has a greater degree of glycosylation than PG2A. Expressed only in ripening fruits (at protein level).

Its subcellular location is the secreted. It localises to the extracellular space. It is found in the apoplast. The protein resides in the cell wall. It carries out the reaction (1,4-alpha-D-galacturonosyl)n+m + H2O = (1,4-alpha-D-galacturonosyl)n + (1,4-alpha-D-galacturonosyl)m.. Functionally, catalytic subunit of the polygalacturonase isozyme 1 and 2 (PG1 and PG2). Acts in concert with the pectinesterase, in the ripening process. Is involved in cell wall metabolism, specifically in polyuronide degradation. The depolymerization and solubilization of cell wall polyuronides mediated by PG2 during ripening seems to be limited by the beta subunit GP1, probably by recruiting PG2 to form PG1. The chain is Polygalacturonase-2 (PG2) from Solanum lycopersicum (Tomato).